The chain runs to 671 residues: DNA ligase (671 aa).

Residues 32 to 36 (DAEYD), 81 to 82 (SL), and Glu-113 each bind NAD(+). Lys-115 serves as the catalytic N6-AMP-lysine intermediate. The NAD(+) site is built by Arg-136, Glu-173, Lys-290, and Lys-314. Residues Cys-408, Cys-411, Cys-426, and Cys-432 each contribute to the Zn(2+) site. One can recognise a BRCT domain in the interval 593 to 671 (EIDSPFAGKT…ETEMLRLLGS (79 aa)).

This sequence belongs to the NAD-dependent DNA ligase family. LigA subfamily. It depends on Mg(2+) as a cofactor. The cofactor is Mn(2+).

The catalysed reaction is NAD(+) + (deoxyribonucleotide)n-3'-hydroxyl + 5'-phospho-(deoxyribonucleotide)m = (deoxyribonucleotide)n+m + AMP + beta-nicotinamide D-nucleotide.. DNA ligase that catalyzes the formation of phosphodiester linkages between 5'-phosphoryl and 3'-hydroxyl groups in double-stranded DNA using NAD as a coenzyme and as the energy source for the reaction. It is essential for DNA replication and repair of damaged DNA. The protein is DNA ligase of Escherichia coli O6:H1 (strain CFT073 / ATCC 700928 / UPEC).